A 301-amino-acid polypeptide reads, in one-letter code: Small ribosomal subunit protein uS2 (301 aa).

Positions 237 to 301 (PTESWNDTVV…QDWSNSTSQW (65 aa)) are disordered. The segment covering 264-278 (PQYAPAPQAAAAPVA) has biased composition (low complexity).

Belongs to the universal ribosomal protein uS2 family. Component of the small ribosomal subunit. Mature ribosomes consist of a small (40S) and a large (60S) subunit. The 40S subunit contains about 33 different proteins and 1 molecule of RNA (18S). The 60S subunit contains about 49 different proteins and 3 molecules of RNA (28S, 5.8S and 5S). Interacts with ribosomal protein S21.

It is found in the cytoplasm. Its function is as follows. Required for the assembly and/or stability of the 40S ribosomal subunit. Required for the processing of the 20S rRNA-precursor to mature 18S rRNA in a late step of the maturation of 40S ribosomal subunits. The polypeptide is Small ribosomal subunit protein uS2 (Diaphorina citri (Asian citrus psyllid)).